A 571-amino-acid polypeptide reads, in one-letter code: Urease subunit alpha (571 aa).

The 439-residue stretch at Gly133–Phe571 folds into the Urease domain. Ni(2+)-binding residues include His138, His140, and Lys221. N6-carboxylysine is present on Lys221. Position 223 (His223) interacts with substrate. Ni(2+) contacts are provided by His250 and His276. Residue His324 is the Proton donor of the active site. Asp364 contributes to the Ni(2+) binding site.

It belongs to the metallo-dependent hydrolases superfamily. Urease alpha subunit family. In terms of assembly, heterotrimer of UreA (gamma), UreB (beta) and UreC (alpha) subunits. Three heterotrimers associate to form the active enzyme. The cofactor is Ni cation. Carboxylation allows a single lysine to coordinate two nickel ions.

It localises to the cytoplasm. The catalysed reaction is urea + 2 H2O + H(+) = hydrogencarbonate + 2 NH4(+). It participates in nitrogen metabolism; urea degradation; CO(2) and NH(3) from urea (urease route): step 1/1. This is Urease subunit alpha from Staphylococcus carnosus (strain TM300).